Reading from the N-terminus, the 426-residue chain is Serine--tRNA ligase (426 aa).

231 to 233 is a binding site for L-serine; sequence TAE. ATP-binding positions include 262–264 and valine 278; that span reads RRE. Glutamate 285 contacts L-serine. Residue 349–352 participates in ATP binding; it reads EVSS. Serine 384 provides a ligand contact to L-serine.

Belongs to the class-II aminoacyl-tRNA synthetase family. Type-1 seryl-tRNA synthetase subfamily. Homodimer. The tRNA molecule binds across the dimer.

The protein resides in the cytoplasm. It carries out the reaction tRNA(Ser) + L-serine + ATP = L-seryl-tRNA(Ser) + AMP + diphosphate + H(+). The catalysed reaction is tRNA(Sec) + L-serine + ATP = L-seryl-tRNA(Sec) + AMP + diphosphate + H(+). The protein operates within aminoacyl-tRNA biosynthesis; selenocysteinyl-tRNA(Sec) biosynthesis; L-seryl-tRNA(Sec) from L-serine and tRNA(Sec): step 1/1. In terms of biological role, catalyzes the attachment of serine to tRNA(Ser). Is also able to aminoacylate tRNA(Sec) with serine, to form the misacylated tRNA L-seryl-tRNA(Sec), which will be further converted into selenocysteinyl-tRNA(Sec). The polypeptide is Serine--tRNA ligase (Chlamydia caviae (strain ATCC VR-813 / DSM 19441 / 03DC25 / GPIC) (Chlamydophila caviae)).